The sequence spans 466 residues: Cysteine--tRNA ligase (466 aa).

Residue C28 coordinates Zn(2+). The short motif at 30–40 (PTVYNYIHIGN) is the 'HIGH' region element. Zn(2+) is bound by residues C208, H233, and E237. The 'KMSKS' region signature appears at 265–269 (KMSKS). K268 lines the ATP pocket.

Belongs to the class-I aminoacyl-tRNA synthetase family. Monomer. Zn(2+) serves as cofactor.

It localises to the cytoplasm. It catalyses the reaction tRNA(Cys) + L-cysteine + ATP = L-cysteinyl-tRNA(Cys) + AMP + diphosphate. This chain is Cysteine--tRNA ligase, found in Staphylococcus aureus (strain bovine RF122 / ET3-1).